Consider the following 999-residue polypeptide: Tyrosine-protein kinase Mer (999 aa).

Residues 1–20 (MGPAPLPLLLGLFLPALWRR) form the signal peptide. At 21-505 (AITEAREEAK…PGNADPVLII (485 aa)) the chain is on the extracellular side. 2 consecutive Ig-like C2-type domains span residues 81–186 (PQVT…EIVS) and 197–273 (PHFT…LTVS). N-linked (GlcNAc...) asparagine glycosylation is found at N114, N170, N207, N215, N234, N294, N316, N329, N336, N354, N389, N395, N442, and N454. The cysteines at positions 115 and 175 are disulfide-linked. A disulfide bridge links C218 with C262. Fibronectin type-III domains follow at residues 286-381 (PPTE…TTEG) and 386-484 (APLN…PAHG). A helical transmembrane segment spans residues 506 to 526 (FGCFCGFILIGLILYISLAIR). Topologically, residues 527 to 999 (KRVQETKFGN…DSSEGSEVLM (473 aa)) are cytoplasmic. The residue at position 543 (S543) is a Phosphoserine. The Protein kinase domain maps to 587–858 (LILGKILGEG…VLRLQLEKLL (272 aa)). Residues 593 to 601 (LGEGEFGSV) and K615 contribute to the ATP site. Residue D723 is the Proton acceptor of the active site. Phosphotyrosine; by autocatalysis is present on residues Y749, Y753, Y754, and Y872. S935 carries the post-translational modification Phosphoserine.

This sequence belongs to the protein kinase superfamily. Tyr protein kinase family. AXL/UFO subfamily. In terms of assembly, interacts (upon activation) with TNK2; stimulates TNK2 autophosphorylation. Interacts (via N-terminus) with extracellular ligands LGALS3, TUB, TULP1 and GAS6. Interacts with VAV1 in a phosphotyrosine-independent manner. Interacts with TIMD4; this interaction enhances TIMD4-mediated efferocytosis. Post-translationally, autophosphorylated on Tyr-749, Tyr-753 and Tyr-754 in the activation loop allowing full activity. Autophosphorylated on Tyr-872 leading to recruitment of downstream partners of the signaling cascade such as PLCG2. In terms of tissue distribution, not expressed in normal B- and T-lymphocytes but is expressed in numerous neoplastic B- and T-cell lines. Highly expressed in testis, ovary, prostate, lung, and kidney, with lower expression in spleen, small intestine, colon, and liver.

It is found in the cell membrane. It carries out the reaction L-tyrosyl-[protein] + ATP = O-phospho-L-tyrosyl-[protein] + ADP + H(+). Its function is as follows. Receptor tyrosine kinase that transduces signals from the extracellular matrix into the cytoplasm by binding to several ligands including LGALS3, TUB, TULP1 or GAS6. Regulates many physiological processes including cell survival, migration, differentiation, and phagocytosis of apoptotic cells (efferocytosis). Ligand binding at the cell surface induces autophosphorylation of MERTK on its intracellular domain that provides docking sites for downstream signaling molecules. Following activation by ligand, interacts with GRB2 or PLCG2 and induces phosphorylation of MAPK1, MAPK2, FAK/PTK2 or RAC1. MERTK signaling plays a role in various processes such as macrophage clearance of apoptotic cells, platelet aggregation, cytoskeleton reorganization and engulfment. Functions in the retinal pigment epithelium (RPE) as a regulator of rod outer segments fragments phagocytosis. Also plays an important role in inhibition of Toll-like receptors (TLRs)-mediated innate immune response by activating STAT1, which selectively induces production of suppressors of cytokine signaling SOCS1 and SOCS3. This is Tyrosine-protein kinase Mer (MERTK) from Homo sapiens (Human).